Reading from the N-terminus, the 398-residue chain is Homeobox protein knotted-1-like 1 (398 aa).

Disordered regions lie at residues Thr43 to His69, Glu172 to Leu192, and Asn234 to Glu277. Residues Ser49–Gly58 are compositionally biased toward gly residues. The ELK domain occupies Glu280–Leu300. Residues Ser301–Ser364 constitute a DNA-binding region (homeobox; TALE-type).

This sequence belongs to the TALE/KNOX homeobox family. In terms of tissue distribution, expressed only in the stems.

The protein resides in the nucleus. Functionally, probably binds to the DNA sequence 5'-TGAC-3'. The polypeptide is Homeobox protein knotted-1-like 1 (Malus domestica (Apple)).